The sequence spans 362 residues: Probable branched-chain-amino-acid aminotransferase (362 aa).

Residue Lys-202 is modified to N6-(pyridoxal phosphate)lysine.

This sequence belongs to the class-IV pyridoxal-phosphate-dependent aminotransferase family. Pyridoxal 5'-phosphate is required as a cofactor.

The catalysed reaction is L-leucine + 2-oxoglutarate = 4-methyl-2-oxopentanoate + L-glutamate. It carries out the reaction L-isoleucine + 2-oxoglutarate = (S)-3-methyl-2-oxopentanoate + L-glutamate. The enzyme catalyses L-valine + 2-oxoglutarate = 3-methyl-2-oxobutanoate + L-glutamate. It functions in the pathway amino-acid biosynthesis; L-isoleucine biosynthesis; L-isoleucine from 2-oxobutanoate: step 4/4. The protein operates within amino-acid biosynthesis; L-leucine biosynthesis; L-leucine from 3-methyl-2-oxobutanoate: step 4/4. Its pathway is amino-acid biosynthesis; L-valine biosynthesis; L-valine from pyruvate: step 4/4. Acts on leucine, isoleucine and valine. The protein is Probable branched-chain-amino-acid aminotransferase (ilvE) of Streptomyces coelicolor (strain ATCC BAA-471 / A3(2) / M145).